The primary structure comprises 564 residues: 2-succinyl-5-enolpyruvyl-6-hydroxy-3-cyclohexene-1-carboxylate synthase (564 aa).

The protein belongs to the TPP enzyme family. MenD subfamily. Homodimer. Requires Mg(2+) as cofactor. The cofactor is Mn(2+). It depends on thiamine diphosphate as a cofactor.

It carries out the reaction isochorismate + 2-oxoglutarate + H(+) = 5-enolpyruvoyl-6-hydroxy-2-succinyl-cyclohex-3-ene-1-carboxylate + CO2. It functions in the pathway quinol/quinone metabolism; 1,4-dihydroxy-2-naphthoate biosynthesis; 1,4-dihydroxy-2-naphthoate from chorismate: step 2/7. Its pathway is quinol/quinone metabolism; menaquinone biosynthesis. Catalyzes the thiamine diphosphate-dependent decarboxylation of 2-oxoglutarate and the subsequent addition of the resulting succinic semialdehyde-thiamine pyrophosphate anion to isochorismate to yield 2-succinyl-5-enolpyruvyl-6-hydroxy-3-cyclohexene-1-carboxylate (SEPHCHC). The chain is 2-succinyl-5-enolpyruvyl-6-hydroxy-3-cyclohexene-1-carboxylate synthase from Photorhabdus laumondii subsp. laumondii (strain DSM 15139 / CIP 105565 / TT01) (Photorhabdus luminescens subsp. laumondii).